The sequence spans 422 residues: Replication factor C large subunit (422 aa).

ATP is bound at residue G63–T70.

It belongs to the activator 1 small subunits family. RfcL subfamily. As to quaternary structure, heteromultimer composed of small subunits (RfcS) and large subunits (RfcL).

Its function is as follows. Part of the RFC clamp loader complex which loads the PCNA sliding clamp onto DNA. The protein is Replication factor C large subunit of Pyrobaculum neutrophilum (strain DSM 2338 / JCM 9278 / NBRC 100436 / V24Sta) (Thermoproteus neutrophilus).